Consider the following 440-residue polypeptide: MSENNEFQSVTESTTAPTTSNPYGPNPADYLSNVKNFQLIDSTLREGEQFANAFFDTEKKIEIARALDDFGVDYIELTSPVASEQSRKDCEAICKLGLKAKILTHIRCHMDDARVAVETGVDGVDVVIGTSKFLRQYSHGKDMNYIAKSAVEVIEFVKSKGIEIRFSSEDSFRSDLVDLLNIYKTVDKIGVNRVGIADTVGCANPRQVYELIRTLKSVVSCDIECHFHNDTGCAIANAYTALEGGARLIDVSVLGIGERNGITPLGGLMARMIVAAPDYVRSKYKLHKIRDIENLVADAVEVNIPFNNPITGFCAFTHKAGIHAKAILANPSTYEILDPHDFGMKRYIHFANRLTGWNAIKSRVDQLNLNLTDDQIKEVTAKIKKLGDVRPLNIDDVDSIIKDFHAELSTPLLKPVNKGTDDDNIDISNGHVSKKAKVTK.

Residues Met1–Tyr23 are compositionally biased toward polar residues. Residues Met1 to Pro27 form a disordered region. The 254-residue stretch at Phe37–Arg290 folds into the Pyruvate carboxyltransferase domain. Arg45 provides a ligand contact to 2-oxoglutarate. Glu46 contacts Mg(2+). 3 residues coordinate 2-oxoglutarate: His105, Arg165, and Thr199. The Mg(2+) site is built by His226 and His228. Catalysis depends on His323, which acts as the Proton acceptor. Ser399 carries the post-translational modification Phosphoserine. Residue Thr410 is modified to Phosphothreonine.

Belongs to the alpha-IPM synthase/homocitrate synthase family. Homocitrate synthase LYS20/LYS21 subfamily. Mg(2+) serves as cofactor. Mn(2+) is required as a cofactor.

The protein localises to the mitochondrion. It carries out the reaction acetyl-CoA + 2-oxoglutarate + H2O = (2R)-homocitrate + CoA + H(+). The protein operates within amino-acid biosynthesis; L-lysine biosynthesis via AAA pathway; L-alpha-aminoadipate from 2-oxoglutarate: step 1/5. In terms of biological role, catalyzes the aldol-type condensation of 2-oxoglutarate with acetyl-CoA to yield homocitrate. Carries out the first step of the alpha-aminoadipate (AAA) lysine biosynthesis pathway. This Saccharomyces cerevisiae (strain ATCC 204508 / S288c) (Baker's yeast) protein is Homocitrate synthase, mitochondrial (LYS21).